The sequence spans 104 residues: Small ribosomal subunit protein uS10 (104 aa).

Belongs to the universal ribosomal protein uS10 family. As to quaternary structure, part of the 30S ribosomal subunit.

In terms of biological role, involved in the binding of tRNA to the ribosomes. This chain is Small ribosomal subunit protein uS10, found in Hydrogenobaculum sp. (strain Y04AAS1).